We begin with the raw amino-acid sequence, 514 residues long: Maturase K (514 aa).

The protein belongs to the intron maturase 2 family. MatK subfamily.

It localises to the plastid. It is found in the chloroplast. Functionally, usually encoded in the trnK tRNA gene intron. Probably assists in splicing its own and other chloroplast group II introns. This is Maturase K from Phoenix dactylifera (Date palm).